A 385-amino-acid chain; its full sequence is D-alanine--D-alanine ligase (385 aa).

Residues 165 to 375 (KRVFTSFGLK…YPELVDRLVE (211 aa)) form the ATP-grasp domain. 201–256 (AGEHGWPLFVKPARAGSSIGITKVDDLAGLDEAVAEAQRHDPKIIVEALLRGREIE) lines the ATP pocket. Mg(2+)-binding residues include Asp329, Glu342, and Asn344.

It belongs to the D-alanine--D-alanine ligase family. Requires Mg(2+) as cofactor. It depends on Mn(2+) as a cofactor.

Its subcellular location is the cytoplasm. It carries out the reaction 2 D-alanine + ATP = D-alanyl-D-alanine + ADP + phosphate + H(+). Its pathway is cell wall biogenesis; peptidoglycan biosynthesis. Functionally, cell wall formation. This is D-alanine--D-alanine ligase from Streptomyces avermitilis (strain ATCC 31267 / DSM 46492 / JCM 5070 / NBRC 14893 / NCIMB 12804 / NRRL 8165 / MA-4680).